Here is a 142-residue protein sequence, read N- to C-terminus: 2-aminomuconate deaminase (142 aa).

The protein belongs to the 2-aminomuconate deaminase family. Homotetramer.

The enzyme catalyses (2Z,4E)-2-aminomuconate + H2O = (3E)-2-oxohex-3-enedioate + NH4(+). Slightly inhibited by Pb(2+), Hg(+) and Cu(2+). Functionally, involved in the modified meta-cleavage pathway for the 2-aminophenol catabolism. Only active toward 2-aminomuconic acid. The protein is 2-aminomuconate deaminase (amnD) of Pseudomonas sp.